The primary structure comprises 215 residues: Cytochrome b6 (215 aa).

Residues 32–52 (IFYCLGGITLTCFLVQVATGF) form a helical membrane-spanning segment. Residue C35 coordinates heme c. Residues H86 and H100 each contribute to the heme b site. Transmembrane regions (helical) follow at residues 90–110 (ASMMVLMMILHVFRVYLTGGF), 116–136 (LTWVTGVVLGVLTASFGVTGY), and 186–206 (LHTFVLPLLTAVFMLMHFLMI). H187 and H202 together coordinate heme b.

This sequence belongs to the cytochrome b family. PetB subfamily. As to quaternary structure, the 4 large subunits of the cytochrome b6-f complex are cytochrome b6, subunit IV (17 kDa polypeptide, PetD), cytochrome f and the Rieske protein, while the 4 small subunits are PetG, PetL, PetM and PetN. The complex functions as a dimer. Heme b is required as a cofactor. Requires heme c as cofactor.

It is found in the plastid. Its subcellular location is the chloroplast thylakoid membrane. Functionally, component of the cytochrome b6-f complex, which mediates electron transfer between photosystem II (PSII) and photosystem I (PSI), cyclic electron flow around PSI, and state transitions. This Arabidopsis thaliana (Mouse-ear cress) protein is Cytochrome b6.